Consider the following 111-residue polypeptide: Gene 81 protein (111 aa).

This Mycobacterium (Mycobacteriophage L5) protein is Gene 81 protein (81).